Reading from the N-terminus, the 91-residue chain is Probable Fe(2+)-trafficking protein (91 aa).

Belongs to the Fe(2+)-trafficking protein family. In terms of assembly, monomer.

Its function is as follows. Could be a mediator in iron transactions between iron acquisition and iron-requiring processes, such as synthesis and/or repair of Fe-S clusters in biosynthetic enzymes. The polypeptide is Probable Fe(2+)-trafficking protein (Escherichia coli O6:H1 (strain CFT073 / ATCC 700928 / UPEC)).